The sequence spans 512 residues: Sodium-dependent phosphate transport protein 1, chloroplastic (512 aa).

Residues 1-59 constitute a chloroplast transit peptide; that stretch reads MNARALLCSSNIHSLYTSNRPPEKTSSSRSLRNLKPSPKSLRVWIYPRNRSSVFRVLVR. The next 11 membrane-spanning stretches (helical) occupy residues 103–123, 141–161, 171–191, 192–212, 234–254, 257–277, 323–343, 361–381, 401–421, 453–473, and 486–506; these read WVIV…RVNM, VGLI…AGGI, VLGF…VAAK, LGLP…GVAM, LVYS…PFLI, FGWP…LTLW, VWAL…LLTW, LLSV…GWIA, IGFL…SPTM, GVLL…GTAA, and VFTI…LFST.

It belongs to the major facilitator superfamily. Sodium/anion cotransporter (TC 2.A.1.14) family. As to expression, expressed in flower buds, sepals of mature flowers and mature leaves, less in senescent leaves and at low levels in roots.

The protein resides in the plastid. Its subcellular location is the chloroplast thylakoid membrane. Its function is as follows. Specific for inorganic phosphate transport across the thylakoid membrane in a sodium dependent manner. Binds glutamate but cannot transport it. May act as an ascorbate transporter at the thylakoid membrane. This is Sodium-dependent phosphate transport protein 1, chloroplastic (ANTR1) from Arabidopsis thaliana (Mouse-ear cress).